Consider the following 388-residue polypeptide: Biotin synthase (388 aa).

A Radical SAM core domain is found at 47–277 (WFGRRVKLNY…DVEVRIAGGR (231 aa)). Residues Cys65, Cys69, and Cys72 each coordinate [4Fe-4S] cluster. Cys109, Cys142, Cys202, and Arg272 together coordinate [2Fe-2S] cluster. Residues 335–371 (APAGGCGSEQSAGCGSHEGGGACGSAPAPRTDEARTD) are disordered.

Belongs to the radical SAM superfamily. Biotin synthase family. In terms of assembly, homodimer. Requires [4Fe-4S] cluster as cofactor. It depends on [2Fe-2S] cluster as a cofactor.

It carries out the reaction (4R,5S)-dethiobiotin + (sulfur carrier)-SH + 2 reduced [2Fe-2S]-[ferredoxin] + 2 S-adenosyl-L-methionine = (sulfur carrier)-H + biotin + 2 5'-deoxyadenosine + 2 L-methionine + 2 oxidized [2Fe-2S]-[ferredoxin]. It participates in cofactor biosynthesis; biotin biosynthesis; biotin from 7,8-diaminononanoate: step 2/2. Functionally, catalyzes the conversion of dethiobiotin (DTB) to biotin by the insertion of a sulfur atom into dethiobiotin via a radical-based mechanism. This chain is Biotin synthase, found in Streptomyces avermitilis (strain ATCC 31267 / DSM 46492 / JCM 5070 / NBRC 14893 / NCIMB 12804 / NRRL 8165 / MA-4680).